The chain runs to 139 residues: Putative pre-16S rRNA nuclease (139 aa).

Belongs to the YqgF nuclease family.

The protein resides in the cytoplasm. Could be a nuclease involved in processing of the 5'-end of pre-16S rRNA. This Streptococcus sanguinis (strain SK36) protein is Putative pre-16S rRNA nuclease.